The primary structure comprises 344 residues: Methionine import ATP-binding protein MetN (344 aa).

The ABC transporter domain occupies 2–241; it reads IELQGLSQRF…PQHEVTRAMI (240 aa). 38–45 contacts ATP; it reads GRSGAGKS.

Belongs to the ABC transporter superfamily. Methionine importer (TC 3.A.1.24) family. As to quaternary structure, the complex is composed of two ATP-binding proteins (MetN), two transmembrane proteins (MetI) and a solute-binding protein (MetQ).

Its subcellular location is the cell inner membrane. The catalysed reaction is L-methionine(out) + ATP + H2O = L-methionine(in) + ADP + phosphate + H(+). It catalyses the reaction D-methionine(out) + ATP + H2O = D-methionine(in) + ADP + phosphate + H(+). Part of the ABC transporter complex MetNIQ involved in methionine import. Responsible for energy coupling to the transport system. The chain is Methionine import ATP-binding protein MetN from Cupriavidus metallidurans (strain ATCC 43123 / DSM 2839 / NBRC 102507 / CH34) (Ralstonia metallidurans).